The primary structure comprises 309 residues: Uricase (309 aa).

A2 carries the post-translational modification N-acetylalanine. Residues K16 and T63 each act as charge relay system in the active site. Residues T63, D64, F165, R182, V237, Q238, and N264 each coordinate urate. Residue H266 is the Charge relay system of the active site. The short motif at S307–L309 is the Microbody targeting signal element.

It belongs to the uricase family.

Its subcellular location is the peroxisome. It carries out the reaction urate + O2 + H2O = 5-hydroxyisourate + H2O2. The protein operates within purine metabolism; urate degradation; (S)-allantoin from urate: step 1/3. Catalyzes the oxidation of uric acid to 5-hydroxyisourate, which is further processed to form (S)-allantoin. The chain is Uricase from Arabidopsis thaliana (Mouse-ear cress).